The sequence spans 2195 residues: Genome polyprotein (2195 aa).

A lipid anchor (N-myristoyl glycine; by host) is attached at G2. The Cytoplasmic segment spans residues 2–1505; the sequence is GAQVSTQKTG…HVSRAFICLQ (1504 aa). An amphipathic alpha-helix region spans residues 567 to 583; that stretch reads LLQGDVVEAVENAVARV. Catalysis depends on for protease 2A activity residues H882 and D900. 2 residues coordinate Zn(2+): C917 and C919. The active-site For protease 2A activity is the C971. Zn(2+)-binding residues include C977 and H979. Positions 1111 to 1183 are membrane-binding; the sequence is NNGWLKKFTE…EQSAPSQSDQ (73 aa). The tract at residues 1111–1249 is oligomerization; sequence NNGWLKKFTE…SPGAGKSVAT (139 aa). The tract at residues 1132–1136 is RNA-binding; the sequence is SIKIQ. Residues 1215–1371 enclose the SF3 helicase domain; that stretch reads EKKMSNYIQF…SMYSQNGKIN (157 aa). Zn(2+)-binding residues include C1379, C1391, and C1396. The segment at 1379 to 1396 adopts a C4-type; degenerate zinc-finger fold; it reads CDEECCPVNFKRCCPLVC. Positions 1423-1430 are RNA-binding; it reads EYNHRHSV. Residues 1434–1439 form an oligomerization region; that stretch reads LEALFQ. The stretch at 1506–1521 is an intramembrane region; that stretch reads ALTTFVSVAGIIYIIY. The Cytoplasmic portion of the chain corresponds to 1522-2195; that stretch reads KLFAGFQGAY…TLRRKWLDSF (674 aa). At Y1531 the chain carries O-(5'-phospho-RNA)-tyrosine. Residues 1551–1729 enclose the Peptidase C3 domain; it reads GPAFEFAVAM…FSAALLKHYF (179 aa). Catalysis depends on for protease 3C activity residues H1590, E1621, and C1697. A RdRp catalytic domain is found at 1960-2076; sequence GHLIAFDYSG…SYPWPIDASL (117 aa). Residues D1966 and D2062 each coordinate Mg(2+).

Belongs to the picornaviruses polyprotein family. In terms of assembly, interacts with capsid protein VP1 and capsid protein VP3 to form heterotrimeric protomers. Interacts with capsid protein VP0, and capsid protein VP3 to form heterotrimeric protomers. Five protomers subsequently associate to form pentamers which serve as building blocks for the capsid. Interacts with capsid protein VP2, capsid protein VP3 and capsid protein VP4 following cleavage of capsid protein VP0. As to quaternary structure, interacts with capsid protein VP1 and capsid protein VP3 in the mature capsid. In terms of assembly, interacts with capsid protein VP0 and capsid protein VP1 to form heterotrimeric protomers. Five protomers subsequently associate to form pentamers which serve as building blocks for the capsid. Interacts with capsid protein VP4 in the mature capsid. Interacts with protein 2C; this interaction may be important for virion morphogenesis. Interacts with capsid protein VP1 and capsid protein VP3. As to quaternary structure, homodimer. In terms of assembly, homohexamer; forms a hexameric ring structure with 6-fold symmetry characteristic of AAA+ ATPases. Interacts (via N-terminus) with host RTN3 (via reticulon domain); this interaction is important for viral replication. Interacts with capsid protein VP3; this interaction may be important for virion morphogenesis. Interacts with protein 3CD. As to quaternary structure, homodimer. Interacts with host GBF1. Interacts (via GOLD domain) with host ACBD3 (via GOLD domain); this interaction allows the formation of a viral protein 3A/ACBD3 heterotetramer with a 2:2 stoichiometry, which will stimulate the recruitment of host PI4KB in order to synthesize PI4P at the viral RNA replication sites. In terms of assembly, interacts with RNA-directed RNA polymerase. Interacts with protein 3AB and with RNA-directed RNA polymerase. As to quaternary structure, interacts with Viral protein genome-linked and with protein 3CD. The cofactor is Mg(2+). Post-translationally, specific enzymatic cleavages in vivo by the viral proteases yield processing intermediates and the mature proteins. In terms of processing, myristoylation is required for the formation of pentamers during virus assembly. Further assembly of 12 pentamers and a molecule of genomic RNA generates the provirion. During virion maturation, immature virions are rendered infectious following cleavage of VP0 into VP4 and VP2. This maturation seems to be an autocatalytic event triggered by the presence of RNA in the capsid and it is followed by a conformational change infectious virion. Post-translationally, myristoylation is required during RNA encapsidation and formation of the mature virus particle. In terms of processing, VPg is uridylylated by the polymerase into VPg-pUpU. This acts as a nucleotide-peptide primer for the genomic RNA replication.

The protein resides in the virion. The protein localises to the host cytoplasm. Its subcellular location is the host cytoplasmic vesicle membrane. It is found in the host nucleus. It catalyses the reaction a ribonucleoside 5'-triphosphate + H2O = a ribonucleoside 5'-diphosphate + phosphate + H(+). The enzyme catalyses Selective cleavage of Tyr-|-Gly bond in the picornavirus polyprotein.. The catalysed reaction is RNA(n) + a ribonucleoside 5'-triphosphate = RNA(n+1) + diphosphate. It carries out the reaction Selective cleavage of Gln-|-Gly bond in the poliovirus polyprotein. In other picornavirus reactions Glu may be substituted for Gln, and Ser or Thr for Gly.. With respect to regulation, replication or transcription is subject to high level of random mutations by the nucleotide analog ribavirin. In terms of biological role, forms an icosahedral capsid of pseudo T=3 symmetry with capsid proteins VP2 and VP3. The capsid is 300 Angstroms in diameter, composed of 60 copies of each capsid protein and enclosing the viral positive strand RNA genome. Capsid protein VP1 mainly forms the vertices of the capsid. Capsid protein VP1 interacts with host cell receptor to provide virion attachment to target host cells. This attachment induces virion internalization. Tyrosine kinases are probably involved in the entry process. After binding to its receptor, the capsid undergoes conformational changes. Capsid protein VP1 N-terminus (that contains an amphipathic alpha-helix) and capsid protein VP4 are externalized. Together, they shape a pore in the host membrane through which viral genome is translocated to host cell cytoplasm. Its function is as follows. Forms an icosahedral capsid of pseudo T=3 symmetry with capsid proteins VP2 and VP3. The capsid is 300 Angstroms in diameter, composed of 60 copies of each capsid protein and enclosing the viral positive strand RNA genome. Functionally, lies on the inner surface of the capsid shell. After binding to the host receptor, the capsid undergoes conformational changes. Capsid protein VP4 is released, Capsid protein VP1 N-terminus is externalized, and together, they shape a pore in the host membrane through which the viral genome is translocated into the host cell cytoplasm. Component of immature procapsids, which is cleaved into capsid proteins VP4 and VP2 after maturation. Allows the capsid to remain inactive before the maturation step. In terms of biological role, cysteine protease that cleaves viral polyprotein and specific host proteins. It is responsible for the autocatalytic cleavage between the P1 and P2 regions, which is the first cleavage occurring in the polyprotein. Also cleaves the host translation initiation factor EIF4G1, in order to shut down the capped cellular mRNA translation. Inhibits the host nucleus-cytoplasm protein and RNA trafficking by cleaving host members of the nuclear pores. Counteracts stress granule formation probably by antagonizing its assembly or promoting its dissassembly. Its function is as follows. Plays an essential role in the virus replication cycle by acting as a viroporin. Creates a pore in the host endoplasmic reticulum and as a consequence releases Ca2+ in the cytoplasm of infected cell. In turn, high levels of cytoplasmic calcium may trigger membrane trafficking and transport of viral ER-associated proteins to viroplasms, sites of viral genome replication. Functionally, induces and associates with structural rearrangements of intracellular membranes. Displays RNA-binding, nucleotide binding and NTPase activities. May play a role in virion morphogenesis and viral RNA encapsidation by interacting with the capsid protein VP3. Localizes the viral replication complex to the surface of membranous vesicles. Together with protein 3CD binds the Cis-Active RNA Element (CRE) which is involved in RNA synthesis initiation. Acts as a cofactor to stimulate the activity of 3D polymerase, maybe through a nucleid acid chaperone activity. In terms of biological role, localizes the viral replication complex to the surface of membranous vesicles. It inhibits host cell endoplasmic reticulum-to-Golgi apparatus transport and causes the disassembly of the Golgi complex, possibly through GBF1 interaction. This would result in depletion of MHC, trail receptors and IFN receptors at the host cell surface. Plays an essential role in viral RNA replication by recruiting ACBD3 and PI4KB at the viral replication sites, thereby allowing the formation of the rearranged membranous structures where viral replication takes place. Its function is as follows. Acts as a primer for viral RNA replication and remains covalently bound to viral genomic RNA. VPg is uridylylated prior to priming replication into VPg-pUpU. The oriI viral genomic sequence may act as a template for this. The VPg-pUpU is then used as primer on the genomic RNA poly(A) by the RNA-dependent RNA polymerase to replicate the viral genome. During genome replication, the VPg-RNA linkage is removed by the host TDP2, thereby accelerating replication. During the late stage of the replication cycle, host TDP2 is excluded from sites of viral RNA synthesis and encapsidation, allowing for the generation of progeny virions. Functionally, involved in the viral replication complex and viral polypeptide maturation. It exhibits protease activity with a specificity and catalytic efficiency that is different from protease 3C. Protein 3CD lacks polymerase activity. The 3C domain in the context of protein 3CD may have an RNA binding activity. Protein 3CD binds to the 5'UTR of the viral genome. Replicates the viral genomic RNA on the surface of intracellular membranes. May form linear arrays of subunits that propagate along a strong head-to-tail interaction called interface-I. Covalently attaches UMP to a tyrosine of VPg, which is used to prime RNA synthesis. The positive stranded RNA genome is first replicated at virus induced membranous vesicles, creating a dsRNA genomic replication form. This dsRNA is then used as template to synthesize positive stranded RNA genomes. ss(+)RNA genomes are either translated, replicated or encapsidated. In terms of biological role, major viral protease that mediates proteolytic processing of the polyprotein. Cleaves host EIF5B, contributing to host translation shutoff. Also cleaves host PABPC1, contributing to host translation shutoff. Cleaves host NLRP1, triggers host N-glycine-mediated degradation of the autoinhibitory NLRP1 N-terminal fragment. This chain is Genome polyprotein, found in Echovirus 11 (strain Gregory).